The chain runs to 491 residues: UDP-N-acetylmuramoyl-L-alanyl-D-glutamate--2,6-diaminopimelate ligase (491 aa).

Residue serine 30 coordinates UDP-N-acetyl-alpha-D-muramoyl-L-alanyl-D-glutamate. 108 to 114 contacts ATP; that stretch reads GTNGKTT. UDP-N-acetyl-alpha-D-muramoyl-L-alanyl-D-glutamate is bound by residues asparagine 149, 150-151, serine 177, glutamine 183, and arginine 185; that span reads TT. Lysine 217 carries the post-translational modification N6-carboxylysine. Meso-2,6-diaminopimelate-binding positions include arginine 383, 407 to 410, glycine 458, and glutamate 462; that span reads DNPR. The Meso-diaminopimelate recognition motif signature appears at 407–410; that stretch reads DNPR.

Belongs to the MurCDEF family. MurE subfamily. Requires Mg(2+) as cofactor. In terms of processing, carboxylation is probably crucial for Mg(2+) binding and, consequently, for the gamma-phosphate positioning of ATP.

Its subcellular location is the cytoplasm. It carries out the reaction UDP-N-acetyl-alpha-D-muramoyl-L-alanyl-D-glutamate + meso-2,6-diaminopimelate + ATP = UDP-N-acetyl-alpha-D-muramoyl-L-alanyl-gamma-D-glutamyl-meso-2,6-diaminopimelate + ADP + phosphate + H(+). The protein operates within cell wall biogenesis; peptidoglycan biosynthesis. Catalyzes the addition of meso-diaminopimelic acid to the nucleotide precursor UDP-N-acetylmuramoyl-L-alanyl-D-glutamate (UMAG) in the biosynthesis of bacterial cell-wall peptidoglycan. The protein is UDP-N-acetylmuramoyl-L-alanyl-D-glutamate--2,6-diaminopimelate ligase of Listeria innocua serovar 6a (strain ATCC BAA-680 / CLIP 11262).